Consider the following 176-residue polypeptide: Disulfide bond formation protein B (176 aa).

The Cytoplasmic segment spans residues 1 to 14 (MLRFLNQCSQGRGA). A helical transmembrane segment spans residues 15–31 (WLLMAFTALALELTALW). Over 32 to 49 (FQHVMLLKPCVLCIYERC) the chain is Periplasmic. The cysteines at positions 41 and 44 are disulfide-linked. Residues 50–65 (ALFGVLGAALIGAIAP) traverse the membrane as a helical segment. Topologically, residues 66–71 (KTPLRY) are cytoplasmic. The helical transmembrane segment at 72-89 (VAMVIWLYSAFRGVQLTY) threads the bilayer. The Periplasmic portion of the chain corresponds to 90–144 (EHTMLQLYPSPFATCDFMARFPEWLPLDKWVPQVFVASGDCAERQWEFLGLEMPQ). Cysteines 104 and 130 form a disulfide. Residues 145–163 (WLLGIFIAYLIVAVLVVIS) form a helical membrane-spanning segment. The Cytoplasmic segment spans residues 164 to 176 (QPFKAKKRDLFGR).

This sequence belongs to the DsbB family.

The protein resides in the cell inner membrane. Required for disulfide bond formation in some periplasmic proteins. Acts by oxidizing the DsbA protein. In Escherichia coli O1:K1 / APEC, this protein is Disulfide bond formation protein B.